The sequence spans 986 residues: Ephrin type-A receptor 4 (986 aa).

Positions 1 to 19 (MAGVPVGALLPLLVGVCGA) are cleaved as a signal peptide. Topologically, residues 20-547 (VTGSRVYPAN…PIIGDGTNPT (528 aa)) are extracellular. The Eph LBD domain occupies 30-209 (EVTLLDSRSV…FYKKCPLTVR (180 aa)). N-linked (GlcNAc...) asparagine glycosylation is found at N235, N340, and N408. Fibronectin type-III domains are found at residues 328–439 (PPSA…TNQA) and 440–537 (APSP…TVPS). A helical membrane pass occupies residues 548–569 (VLLVSVAGSVVLVVILIAAFVI). Residues 570-986 (SRRRSKYSKA…QQMHGRMVPV (417 aa)) lie on the Cytoplasmic side of the membrane. 2 positions are modified to phosphotyrosine; by autocatalysis: Y596 and Y602. The Protein kinase domain occupies 621-882 (IKIEKVIGVG…QIVNMLDKLI (262 aa)). ATP contacts are provided by residues 627–635 (IGVGEFGEV) and K653. D746 functions as the Proton acceptor in the catalytic mechanism. Y779 and Y928 each carry phosphotyrosine; by autocatalysis. An SAM domain is found at 911–975 (SAVVSVSDWL…LSSVQAMRSQ (65 aa)). Residues 984–986 (VPV) carry the PDZ-binding motif.

It belongs to the protein kinase superfamily. Tyr protein kinase family. Ephrin receptor subfamily. As to quaternary structure, interacts with the src family kinase, p59-Fyn, through the major phosphorylation site at position Tyr-602. Interacts (via PDZ motif) with SIPA1L1 (via PDZ domain); controls neuronal morphology through regulation of the RAP1 (RAP1A or RAP1B) and RAP2 (RAP2A, RAP2B or RAP2C) GTPases. Expressed at high levels in brain, with expression also detected in the kidney, lung, muscle and thymus.

The protein resides in the cell membrane. Its subcellular location is the early endosome. The enzyme catalyses L-tyrosyl-[protein] + ATP = O-phospho-L-tyrosyl-[protein] + ADP + H(+). Its function is as follows. Receptor tyrosine kinase which binds membrane-bound ephrin family ligands residing on adjacent cells, leading to contact-dependent bidirectional signaling into neighboring cells. The signaling pathway downstream of the receptor is referred to as forward signaling while the signaling pathway downstream of the ephrin ligand is referred to as reverse signaling. Highly promiscuous, it has the unique property among Eph receptors to bind and to be physiologically activated by both GPI-anchored ephrin-A and transmembrane ephrin-B ligands including EFNA1 and EFNB3. Upon activation by ephrin ligands, modulates cell morphology and integrin-dependent cell adhesion through regulation of the Rac, Rap and Rho GTPases activity. Plays an important role in the development of the nervous system controlling different steps of axonal guidance including the establishment of the corticospinal projections. This Gallus gallus (Chicken) protein is Ephrin type-A receptor 4 (EPHA4).